The sequence spans 261 residues: Indole-3-glycerol phosphate synthase (261 aa).

Belongs to the TrpC family.

It catalyses the reaction 1-(2-carboxyphenylamino)-1-deoxy-D-ribulose 5-phosphate + H(+) = (1S,2R)-1-C-(indol-3-yl)glycerol 3-phosphate + CO2 + H2O. It participates in amino-acid biosynthesis; L-tryptophan biosynthesis; L-tryptophan from chorismate: step 4/5. This is Indole-3-glycerol phosphate synthase from Burkholderia pseudomallei (strain 668).